The following is a 102-amino-acid chain: Large ribosomal subunit protein bL21 (102 aa).

It belongs to the bacterial ribosomal protein bL21 family. Part of the 50S ribosomal subunit. Contacts protein L20.

This protein binds to 23S rRNA in the presence of protein L20. This chain is Large ribosomal subunit protein bL21, found in Citrifermentans bemidjiense (strain ATCC BAA-1014 / DSM 16622 / JCM 12645 / Bem) (Geobacter bemidjiensis).